The sequence spans 480 residues: MKSSLRLNTGIILQIIGPVMDISFPSGKMPNIYNSLLIEGKTESGDRLKVVCEVQQLLGDNVVRAIAMSATDGLQRGIKVIDTGAPLSVPVGVTTLGRIFNVLGESVDKMGLIDYSITLPIHRAAPSFVELDTQLSIFETGIKVVDLLAPYRRGGKIGLFGGAGVGKTVLIMELINNIAKAHGGVSVFGGVGERTREGNDLYQEMKESGVINDRNFKESKVALIYGQMNEPPGARMRVGLTALTMAEYFRDVNKQDVLLFIDNIFRFVQAGSEVSALLGRMPSAVGYQPTLATEMGGLQERITSTKVGSITSIQAVYVPADDLTDPAPATTFAHLDATTVLSRNLASKGIYPAVDPLDSTSTMLQPWIVGEEHYNTAQSVKKTLQRYKELQDIIAILGLDELSEEDRLVVSRARKVERFLSQPFFVAEVFTGSPGKYVTLAETIEGFKAILSGDLDEVPEQAFYLVGNIEEVISKAIELQ.

161–168 (GGAGVGKT) lines the ATP pocket.

Belongs to the ATPase alpha/beta chains family. In terms of assembly, F-type ATPases have 2 components, CF(1) - the catalytic core - and CF(0) - the membrane proton channel. CF(1) has five subunits: alpha(3), beta(3), gamma(1), delta(1), epsilon(1). CF(0) has four main subunits: a(1), b(1), b'(1) and c(9-12).

The protein localises to the plastid. The protein resides in the chloroplast thylakoid membrane. It catalyses the reaction ATP + H2O + 4 H(+)(in) = ADP + phosphate + 5 H(+)(out). Produces ATP from ADP in the presence of a proton gradient across the membrane. The catalytic sites are hosted primarily by the beta subunits. This is ATP synthase subunit beta, chloroplastic from Euglena gracilis.